We begin with the raw amino-acid sequence, 453 residues long: Malate dehydrogenase [NADP], chloroplastic (453 aa).

The N-terminal 68 residues, 1–68, are a transit peptide targeting the chloroplast; sequence MAVVKLSPWA…RLSSPASIRC (68 aa). An intrachain disulfide couples Cys-88 to Cys-93. 117–123 lines the NADP(+) pocket; that stretch reads GAAGMIS. The substrate site is built by Arg-198 and Arg-204. Residues Asn-211, Gln-218, and 235–237 each bind NADP(+); that span reads VGN. Substrate is bound by residues Asn-237 and Arg-268. Catalysis depends on His-293, which acts as the Proton acceptor. An intrachain disulfide couples Cys-429 to Cys-441.

This sequence belongs to the LDH/MDH superfamily. MDH type 2 family. In terms of assembly, homodimer.

The protein localises to the plastid. It localises to the chloroplast. The enzyme catalyses (S)-malate + NADP(+) = oxaloacetate + NADPH + H(+). Its activity is regulated as follows. Chloroplast NADP-MDH is activated upon illumination. In order to be enzymatically active, disulfide bridges on the protein must be reduced by thioredoxin which receives electrons from ferredoxin and the electron transport system of photosynthesis. The chloroplastic, NADP-dependent form is essential for the photosynthesis C4 cycle, which allows plants to circumvent the problem of photorespiration. In C4 plants, NADP-MDH activity acts to convert oxaloacetate to malate in chloroplasts of mesophyll cells for transport to the bundle sheath cells. The chain is Malate dehydrogenase [NADP], chloroplastic from Flaveria bidentis (Coastal plain yellowtops).